A 257-amino-acid polypeptide reads, in one-letter code: Pyridoxine 5'-phosphate synthase (257 aa).

Asn6 contributes to the 3-amino-2-oxopropyl phosphate binding site. Asp8–His9 lines the 1-deoxy-D-xylulose 5-phosphate pocket. Arg17 provides a ligand contact to 3-amino-2-oxopropyl phosphate. His41 (proton acceptor) is an active-site residue. Positions 43 and 48 each coordinate 1-deoxy-D-xylulose 5-phosphate. Glu68 functions as the Proton acceptor in the catalytic mechanism. Residue Thr98 participates in 1-deoxy-D-xylulose 5-phosphate binding. The active-site Proton donor is the His210. 3-amino-2-oxopropyl phosphate contacts are provided by residues Gly211 and Gly232–Gln233.

It belongs to the PNP synthase family. As to quaternary structure, homooctamer; tetramer of dimers.

It is found in the cytoplasm. The catalysed reaction is 3-amino-2-oxopropyl phosphate + 1-deoxy-D-xylulose 5-phosphate = pyridoxine 5'-phosphate + phosphate + 2 H2O + H(+). The protein operates within cofactor biosynthesis; pyridoxine 5'-phosphate biosynthesis; pyridoxine 5'-phosphate from D-erythrose 4-phosphate: step 5/5. Functionally, catalyzes the complicated ring closure reaction between the two acyclic compounds 1-deoxy-D-xylulose-5-phosphate (DXP) and 3-amino-2-oxopropyl phosphate (1-amino-acetone-3-phosphate or AAP) to form pyridoxine 5'-phosphate (PNP) and inorganic phosphate. This chain is Pyridoxine 5'-phosphate synthase, found in Campylobacter jejuni (strain RM1221).